We begin with the raw amino-acid sequence, 313 residues long: Leucine zipper protein 4 (313 aa).

The segment at 1-119 is interaction with DDX39B/UAP56; sequence MASFRKLTLS…PLIEQEKCSD (119 aa). Disordered regions lie at residues 1–238 and 290–313; these read MASF…QGDL and QSGR…TITT. A UAP56-binding motif (UBM); required for proper nuclear localization motif is present at residues 22–40; sequence KVNFLDMSLDDIIIYKELE. A compositionally biased stretch (basic and acidic residues) spans 34–60; that stretch reads IIYKELEGTNAEEEKNKRQNHSKKESP. An arg-rich; required for RNA-binding region spans residues 51 to 80; sequence RQNHSKKESPSRQQSKAHRHRHRRGYSRCR. The segment covering 65-77 has biased composition (basic residues); the sequence is SKAHRHRHRRGYS. Residues 81 to 92 show a composition bias toward basic and acidic residues; it reads SNSEEGNHDKKP. Positions 126-141 are enriched in polar residues; it reads EKNQGQSEGNQHQSEG. Residues 142–168 show a composition bias toward basic and acidic residues; that stretch reads NPDKSEESQGQPEENHHSERSRNHLER. Positions 169 to 179 are enriched in polar residues; it reads SLSQSDRSQGQ. Residues 178–236 form an RS-containing His-rich (RS-H); necessary for nuclear localization region; it reads GQLKRHHPQYERSHGQYKRSHGQSERSHGHSERSHGHSERSHGHSERSHGHSKRSRSQG. Residues 199 to 226 show a composition bias toward basic and acidic residues; that stretch reads GQSERSHGHSERSHGHSERSHGHSERSH. Residue Ser-234 is modified to Phosphoserine. Residues 238 to 287 are leucine-zipper; required for RNA-binding and for its relocalization to the cytoplasm during cell division; it reads LVDTQSDLIATQRDLIATQKDLIATQRDLIATQRDLIVTQRDLVATERDL. The interaction with NXF1 stretch occupies residues 241-313; sequence TQSDLIATQR…YSTGKNTITT (73 aa). The segment covering 304–313 has biased composition (polar residues); that stretch reads YSTGKNTITT.

In terms of assembly, interacts with NXF1, NXF2, THOC1, THOC5, DDX39B/UAP56 and SRRT. As to expression, expressed specifically in testis. Also expressed in a wide variety of cancer types, but particularly high levels of expression observed in melanoma cells.

Its subcellular location is the nucleus. The protein localises to the cytoplasm. Export adapter involved in mRNA nuclear export in cancer cells. Binds and enhances the RNA-binding activity of the nuclear RNA export factor NXF1. Can restore mRNA export function in cells compromised by loss of mRNA export adapters. This Homo sapiens (Human) protein is Leucine zipper protein 4 (LUZP4).